Here is a 38-residue protein sequence, read N- to C-terminus: Toxin Bot33 (38 aa).

3 disulfides stabilise this stretch: C8-C28, C14-C33, and C18-C35.

Belongs to the short scorpion toxin superfamily. Potassium channel inhibitor family. As to expression, expressed by the venom gland.

The protein resides in the secreted. Functionally, a probable toxin that has no activity on the tested mammalian voltage-gated potassium channels (when tested at 1 uM) and is not toxic to mice. It resembles alpha toxins that block voltage-gated potassium channels. This chain is Toxin Bot33, found in Buthus occitanus tunetanus (Common European scorpion).